We begin with the raw amino-acid sequence, 222 residues long: Probable GTP-binding protein EngB (222 aa).

The 175-residue stretch at 25–199 (AGVEVAFAGR…SQLLQNWFDT (175 aa)) folds into the EngB-type G domain. Residues 33–40 (GRSNAGKS), 60–64 (GRTQH), 78–81 (DLPG), 145–148 (TKAD), and 178–180 (FSS) each bind GTP. Mg(2+) is bound by residues serine 40 and threonine 62.

This sequence belongs to the TRAFAC class TrmE-Era-EngA-EngB-Septin-like GTPase superfamily. EngB GTPase family. Requires Mg(2+) as cofactor.

In terms of biological role, necessary for normal cell division and for the maintenance of normal septation. The protein is Probable GTP-binding protein EngB of Nitrosomonas europaea (strain ATCC 19718 / CIP 103999 / KCTC 2705 / NBRC 14298).